A 356-amino-acid polypeptide reads, in one-letter code: S-adenosylmethionine:tRNA ribosyltransferase-isomerase (356 aa).

The protein belongs to the QueA family. As to quaternary structure, monomer.

The protein localises to the cytoplasm. It catalyses the reaction 7-aminomethyl-7-carbaguanosine(34) in tRNA + S-adenosyl-L-methionine = epoxyqueuosine(34) in tRNA + adenine + L-methionine + 2 H(+). It participates in tRNA modification; tRNA-queuosine biosynthesis. Its function is as follows. Transfers and isomerizes the ribose moiety from AdoMet to the 7-aminomethyl group of 7-deazaguanine (preQ1-tRNA) to give epoxyqueuosine (oQ-tRNA). This is S-adenosylmethionine:tRNA ribosyltransferase-isomerase from Escherichia coli (strain ATCC 8739 / DSM 1576 / NBRC 3972 / NCIMB 8545 / WDCM 00012 / Crooks).